The chain runs to 1038 residues: DNA polymerase delta catalytic subunit (1038 aa).

Residues 1 to 29 form a disordered region; it reads MSHSIPITSSPPPALKKLKLPNGSEEPSE. Residues Cys942, Cys945, Cys958, and Cys961 each contribute to the Zn(2+) site. A CysA-type zinc finger spans residues 942 to 961; sequence CVSCRTPLKKDNLGALCPNC. [4Fe-4S] cluster contacts are provided by Cys992, Cys995, Cys1005, and Cys1010. Residues 992–1010 carry the CysB motif motif; that stretch reads CQRCQGSLHQEVLCSNKDC.

It belongs to the DNA polymerase type-B family. In terms of assembly, heterodimer with subunits of 125 kDa and 50 kDa. The 125 kDa subunit contains the polymerase active site and most likely the active site for the 3'-5' exonuclease activity. Requires [4Fe-4S] cluster as cofactor.

Its subcellular location is the nucleus. The catalysed reaction is DNA(n) + a 2'-deoxyribonucleoside 5'-triphosphate = DNA(n+1) + diphosphate. This polymerase possesses two enzymatic activities: DNA synthesis (polymerase) and an exonucleolytic activity that degrades single-stranded DNA in the 3'- to 5'-direction. This is DNA polymerase delta catalytic subunit (POL3) from Candida albicans (Yeast).